Here is a 256-residue protein sequence, read N- to C-terminus: Acetylglutamate kinase (256 aa).

Substrate-binding positions include 40–41, Arg-62, and Asn-154; that span reads GG.

It belongs to the acetylglutamate kinase family. ArgB subfamily.

The protein resides in the cytoplasm. The catalysed reaction is N-acetyl-L-glutamate + ATP = N-acetyl-L-glutamyl 5-phosphate + ADP. It functions in the pathway amino-acid biosynthesis; L-arginine biosynthesis; N(2)-acetyl-L-ornithine from L-glutamate: step 2/4. Functionally, catalyzes the ATP-dependent phosphorylation of N-acetyl-L-glutamate. This is Acetylglutamate kinase from Staphylococcus aureus (strain bovine RF122 / ET3-1).